The following is a 229-amino-acid chain: Prolactin (229 aa).

An N-terminal signal peptide occupies residues M1 to S30. An intrachain disulfide couples C34 to C41. S56, S64, and S120 each carry phosphoserine. Disulfide bonds link C88–C204 and C221–C229.

This sequence belongs to the somatotropin/prolactin family. Interacts with PRLR.

Its subcellular location is the secreted. In terms of biological role, prolactin acts primarily on the mammary gland by promoting lactation. The protein is Prolactin (PRL) of Neovison vison (American mink).